We begin with the raw amino-acid sequence, 305 residues long: Probable 5-dehydro-4-deoxyglucarate dehydratase (305 aa).

This sequence belongs to the DapA family.

The enzyme catalyses 5-dehydro-4-deoxy-D-glucarate + H(+) = 2,5-dioxopentanoate + CO2 + H2O. The protein operates within carbohydrate acid metabolism; D-glucarate degradation; 2,5-dioxopentanoate from D-glucarate: step 2/2. The polypeptide is Probable 5-dehydro-4-deoxyglucarate dehydratase (Xanthomonas campestris pv. campestris (strain B100)).